Consider the following 116-residue polypeptide: Protein Rev (116 aa).

Ser5 and Ser8 each carry phosphoserine; by host CK2. Positions 18–26 (LIKFLYQSN) are homomultimerization. The interval 23-49 (YQSNPPPNPEGTRQARRNRRRRWRERQ) is disordered. Residues 34-50 (TRQARRNRRRRWRERQR) carry the Nuclear localization signal and RNA-binding (RRE) motif. Positions 36 to 47 (QARRNRRRRWRE) are enriched in basic residues. Residues 73–84 (LQLPPLERLTLD) carry the Nuclear export signal and binding to XPO1 motif. Phosphoserine; by host occurs at positions 92 and 99.

It belongs to the HIV-1 REV protein family. In terms of assembly, homomultimer; when bound to the RRE. Multimeric assembly is essential for activity and may involve XPO1. Binds to human KPNB1, XPO1, TNPO1, RANBP5 and IPO7. Interacts with the viral Integrase. Interacts with human KHDRBS1. Interacts with human NAP1; this interaction decreases Rev multimerization and stimulates its activity. Interacts with human DEAD-box helicases DDX3 and DDX24; these interactions may serve for viral RNA export to the cytoplasm and packaging, respectively. Interacts with human PSIP1; this interaction may inhibit HIV-1 DNA integration by promoting dissociation of the Integrase-LEDGF/p75 complex. In terms of processing, asymmetrically arginine dimethylated at one site by host PRMT6. Methylation impairs the RNA-binding activity and export of viral RNA from the nucleus to the cytoplasm. Post-translationally, phosphorylated by protein kinase CK2. Presence of, and maybe binding to the N-terminus of the regulatory beta subunit of CK2 is necessary for CK2-mediated Rev's phosphorylation.

Its subcellular location is the host nucleus. The protein resides in the host nucleolus. It is found in the host cytoplasm. Its function is as follows. Escorts unspliced or incompletely spliced viral pre-mRNAs (late transcripts) out of the nucleus of infected cells. These pre-mRNAs carry a recognition sequence called Rev responsive element (RRE) located in the env gene, that is not present in fully spliced viral mRNAs (early transcripts). This function is essential since most viral proteins are translated from unspliced or partially spliced pre-mRNAs which cannot exit the nucleus by the pathway used by fully processed cellular mRNAs. Rev itself is translated from a fully spliced mRNA that readily exits the nucleus. Rev's nuclear localization signal (NLS) binds directly to KPNB1/Importin beta-1 without previous binding to KPNA1/Importin alpha-1. KPNB1 binds to the GDP bound form of RAN (Ran-GDP) and targets Rev to the nucleus. In the nucleus, the conversion from Ran-GDP to Ran-GTP dissociates Rev from KPNB1 and allows Rev's binding to the RRE in viral pre-mRNAs. Rev multimerization on the RRE via cooperative assembly exposes its nuclear export signal (NES) to the surface. Rev can then form a complex with XPO1/CRM1 and Ran-GTP, leading to nuclear export of the complex. Conversion from Ran-GTP to Ran-GDP mediates dissociation of the Rev/RRE/XPO1/RAN complex, so that Rev can return to the nucleus for a subsequent round of export. Beside KPNB1, also seems to interact with TNPO1/Transportin-1, RANBP5/IPO5 and IPO7/RANBP7 for nuclear import. The nucleoporin-like HRB/RIP is an essential cofactor that probably indirectly interacts with Rev to release HIV RNAs from the perinuclear region to the cytoplasm. The chain is Protein Rev from Human immunodeficiency virus type 1 group M subtype B (isolate HXB3) (HIV-1).